We begin with the raw amino-acid sequence, 278 residues long: 2-succinyl-6-hydroxy-2,4-cyclohexadiene-1-carboxylate synthase (278 aa).

This sequence belongs to the AB hydrolase superfamily. MenH family. Monomer.

The catalysed reaction is 5-enolpyruvoyl-6-hydroxy-2-succinyl-cyclohex-3-ene-1-carboxylate = (1R,6R)-6-hydroxy-2-succinyl-cyclohexa-2,4-diene-1-carboxylate + pyruvate. It functions in the pathway quinol/quinone metabolism; 1,4-dihydroxy-2-naphthoate biosynthesis; 1,4-dihydroxy-2-naphthoate from chorismate: step 3/7. The protein operates within quinol/quinone metabolism; menaquinone biosynthesis. Its function is as follows. Catalyzes a proton abstraction reaction that results in 2,5-elimination of pyruvate from 2-succinyl-5-enolpyruvyl-6-hydroxy-3-cyclohexene-1-carboxylate (SEPHCHC) and the formation of 2-succinyl-6-hydroxy-2,4-cyclohexadiene-1-carboxylate (SHCHC). The polypeptide is 2-succinyl-6-hydroxy-2,4-cyclohexadiene-1-carboxylate synthase (Photorhabdus laumondii subsp. laumondii (strain DSM 15139 / CIP 105565 / TT01) (Photorhabdus luminescens subsp. laumondii)).